A 429-amino-acid chain; its full sequence is Putative pentatricopeptide repeat-containing protein At1g03510 (429 aa).

PPR repeat units follow at residues 11–45, 47–81, 82–112, 113–147, 148–180, 181–215, 216–246, 247–281, 282–312, and 318–348; these read KLIS…FALP, DAHV…NFLS, NPFV…IPQR, NAVV…PNES, SFNA…RFKP, NLIT…LIEP, HPQL…MEDR, DVVA…KVTP, DDIA…MQGD, and SKDH…MPEK. Residues 353–428 form a type E motif region; that stretch reads TWGALLGACR…SPGSSWCLFK (76 aa).

Belongs to the PPR family. PCMP-E subfamily.

This Arabidopsis thaliana (Mouse-ear cress) protein is Putative pentatricopeptide repeat-containing protein At1g03510 (PCMP-E3).